Reading from the N-terminus, the 884-residue chain is Protein translocase subunit SecA (884 aa).

Residues Gln-82, 100-104 (GEGKT), and Asp-491 each bind ATP.

It belongs to the SecA family.

Its subcellular location is the plastid. The protein resides in the chloroplast stroma. The protein localises to the chloroplast thylakoid membrane. The catalysed reaction is ATP + H2O + cellular proteinSide 1 = ADP + phosphate + cellular proteinSide 2.. Has a central role in coupling the hydrolysis of ATP to the transfer of proteins across the thylakoid membrane. The protein is Protein translocase subunit SecA of Olisthodiscus luteus (Marine phytoflagellate).